The primary structure comprises 348 residues: MSGLSHLESEGCRNLLGLLDNDEIMALCDTVTNRLVQPVDRQDAIHAILVYSQNVEELLRRKKVHREVIFKYLAKQGVVVPPTAEKHNLIQYAKDYWAKQSPKLKDTAEPVTKTEDIQLFKQQAKEDKEAEKVDFRRLGEEFCHWFFELLNSQNPFLGPPQDDWGPQHFWHDAKLRFYYNTSEQNTTDYQGAEIVSLRLLSLVKEEFLFLSPNLDSQGLKCASSPHGLVMVGVAGTVHRGNSCLGIFEQIFGLIRSPFVENTWKIKFINLRIIGGSSLAPESVLKPSVTFEPSDLEAFYNVITLCNSPEVRPNVRQIIDSGTGDQVLHSGDEALLNKREMNLLTPLKH.

In terms of biological role, may be involved in apoptosis regulation. This is an uncharacterized protein from Mus musculus (Mouse).